The primary structure comprises 310 residues: Coproporphyrin III ferrochelatase (310 aa).

Positions 184 and 265 each coordinate Fe(2+).

The protein belongs to the ferrochelatase family.

It localises to the cytoplasm. It catalyses the reaction Fe-coproporphyrin III + 2 H(+) = coproporphyrin III + Fe(2+). The protein operates within porphyrin-containing compound metabolism; protoheme biosynthesis. Its function is as follows. Involved in coproporphyrin-dependent heme b biosynthesis. Catalyzes the insertion of ferrous iron into coproporphyrin III to form Fe-coproporphyrin III. This chain is Coproporphyrin III ferrochelatase, found in Limosilactobacillus reuteri (strain DSM 20016) (Lactobacillus reuteri).